The sequence spans 880 residues: Leucine-rich repeat-containing protein 66 (880 aa).

The helical transmembrane segment at 4–24 (LYFRVITIVIGLYFTGIMTNA) threads the bilayer. The N-linked (GlcNAc...) asparagine glycan is linked to Asn-45. LRR repeat units lie at residues 86-107 (KIKHLDLSNNLISKITLSPFAY), 110-130 (ALEVLNLSNNAIHSLSLDLLS), 149-171 (LLKVLILQRNKLSDTPKGLWKLK), 172-193 (SLQSLDLSFNGILQIGWSDFHN), 196-217 (QLENLCLKSNKIFKIPPQAFKD), and 220-241 (KLQVIDLSNNALITILPMMIIA). Asn-115 is a glycosylation site (N-linked (GlcNAc...) asparagine). A disordered region spans residues 319-368 (SKAERPQGGRHTGISTLGKKAKAGSGLRKKQRRLPRSVRSTRDVQAAGKK). Residues 337–354 (KKAKAGSGLRKKQRRLPR) are compositionally biased toward basic residues. The helical transmembrane segment at 376 to 396 (ALAVCLSVFITFLVAFSLGAF) threads the bilayer. 2 disordered regions span residues 463–504 (PHPH…NDGA) and 679–746 (VTPA…SKDN). Over residues 483–493 (GSSQSPGQCGD) the composition is skewed to polar residues. The span at 697–707 (CELESDCDSDE) shows a compositional bias: acidic residues. The span at 709–720 (SLFTLSSISSES) shows a compositional bias: low complexity. At Ser-723 the chain carries Phosphoserine. Positions 737–746 (DESSGASKDN) are enriched in polar residues. N-linked (GlcNAc...) asparagine glycosylation occurs at Asn-746. Ser-752 is modified (phosphoserine). The N-linked (GlcNAc...) asparagine glycan is linked to Asn-756. 2 disordered regions span residues 764-816 (GKCK…PLGD) and 855-880 (TPPCSAEVPSDPDKAAFHERDSDILK). 2 stretches are compositionally biased toward basic and acidic residues: residues 788–800 (THLENASDTDRSE) and 865–880 (DPDKAAFHERDSDILK).

The protein resides in the membrane. The chain is Leucine-rich repeat-containing protein 66 (LRRC66) from Homo sapiens (Human).